Here is a 304-residue protein sequence, read N- to C-terminus: Protoheme IX farnesyltransferase (304 aa).

Helical transmembrane passes span 24 to 44 (VMTL…GTIH), 45 to 65 (PVIA…AAAL), 107 to 127 (VFVM…FSIF), 145 to 165 (IVIG…AVTG), 172 to 192 (VLLF…LALF), 234 to 254 (WIGG…LVFV), and 277 to 297 (LFGY…GDRL).

The protein belongs to the UbiA prenyltransferase family. Protoheme IX farnesyltransferase subfamily.

Its subcellular location is the cell inner membrane. The catalysed reaction is heme b + (2E,6E)-farnesyl diphosphate + H2O = Fe(II)-heme o + diphosphate. It functions in the pathway porphyrin-containing compound metabolism; heme O biosynthesis; heme O from protoheme: step 1/1. Functionally, converts heme B (protoheme IX) to heme O by substitution of the vinyl group on carbon 2 of heme B porphyrin ring with a hydroxyethyl farnesyl side group. The chain is Protoheme IX farnesyltransferase from Novosphingobium aromaticivorans (strain ATCC 700278 / DSM 12444 / CCUG 56034 / CIP 105152 / NBRC 16084 / F199).